The sequence spans 124 residues: Small ribosomal subunit protein uS12 (124 aa).

At aspartate 89 the chain carries 3-methylthioaspartic acid. The interval 104–124 is disordered; it reads TQGVKNRGQARSRYGAKKEKK. Residues 111–124 show a composition bias toward basic residues; sequence GQARSRYGAKKEKK.

Belongs to the universal ribosomal protein uS12 family. Part of the 30S ribosomal subunit. Contacts proteins S8 and S17. May interact with IF1 in the 30S initiation complex.

Functionally, with S4 and S5 plays an important role in translational accuracy. In terms of biological role, interacts with and stabilizes bases of the 16S rRNA that are involved in tRNA selection in the A site and with the mRNA backbone. Located at the interface of the 30S and 50S subunits, it traverses the body of the 30S subunit contacting proteins on the other side and probably holding the rRNA structure together. The combined cluster of proteins S8, S12 and S17 appears to hold together the shoulder and platform of the 30S subunit. This chain is Small ribosomal subunit protein uS12, found in Micrococcus luteus (strain ATCC 4698 / DSM 20030 / JCM 1464 / CCM 169 / CCUG 5858 / IAM 1056 / NBRC 3333 / NCIMB 9278 / NCTC 2665 / VKM Ac-2230) (Micrococcus lysodeikticus).